Here is a 242-residue protein sequence, read N- to C-terminus: tRNA pseudouridine synthase A (242 aa).

Catalysis depends on aspartate 51, which acts as the Nucleophile. Tyrosine 107 is a binding site for substrate.

This sequence belongs to the tRNA pseudouridine synthase TruA family. As to quaternary structure, homodimer.

It carries out the reaction uridine(38/39/40) in tRNA = pseudouridine(38/39/40) in tRNA. Formation of pseudouridine at positions 38, 39 and 40 in the anticodon stem and loop of transfer RNAs. The polypeptide is tRNA pseudouridine synthase A (Helicobacter pylori (strain G27)).